The following is a 124-amino-acid chain: Small ribosomal subunit protein uS12 (124 aa).

A 3-methylthioaspartic acid modification is found at Asp89.

The protein belongs to the universal ribosomal protein uS12 family. As to quaternary structure, part of the 30S ribosomal subunit. Contacts proteins S8 and S17. May interact with IF1 in the 30S initiation complex.

With S4 and S5 plays an important role in translational accuracy. In terms of biological role, interacts with and stabilizes bases of the 16S rRNA that are involved in tRNA selection in the A site and with the mRNA backbone. Located at the interface of the 30S and 50S subunits, it traverses the body of the 30S subunit contacting proteins on the other side and probably holding the rRNA structure together. The combined cluster of proteins S8, S12 and S17 appears to hold together the shoulder and platform of the 30S subunit. The sequence is that of Small ribosomal subunit protein uS12 from Caldanaerobacter subterraneus subsp. tengcongensis (strain DSM 15242 / JCM 11007 / NBRC 100824 / MB4) (Thermoanaerobacter tengcongensis).